The chain runs to 169 residues: Der GTPase-activating protein YihI (169 aa).

Disordered regions lie at residues 1–75 and 144–169; these read MKPS…IPLG and GLSYDDDEEEEEDEKQEDMMRLLRGN. Over residues 10 to 19 the composition is skewed to basic residues; sequence SKGHAKARRK. Basic and acidic residues predominate over residues 20-30; that stretch reads TREELDQEARD. Residues 31–40 show a composition bias toward basic residues; that stretch reads RKRQKKRRGH. Residues 49–58 are compositionally biased toward polar residues; the sequence is GNTTSGSKGQ. A compositionally biased stretch (acidic residues) spans 147–159; the sequence is YDDDEEEEEDEKQ. A compositionally biased stretch (basic and acidic residues) spans 160–169; it reads EDMMRLLRGN.

Belongs to the YihI family. In terms of assembly, interacts with Der.

A GTPase-activating protein (GAP) that modifies Der/EngA GTPase function. May play a role in ribosome biogenesis. The sequence is that of Der GTPase-activating protein YihI from Escherichia coli (strain 55989 / EAEC).